Consider the following 344-residue polypeptide: Uroporphyrinogen decarboxylase (344 aa).

Substrate-binding positions include 26–30 (RQAGR), Phe45, Asp75, Tyr151, Ser206, and His320.

It belongs to the uroporphyrinogen decarboxylase family. Homodimer.

The protein localises to the cytoplasm. It catalyses the reaction uroporphyrinogen III + 4 H(+) = coproporphyrinogen III + 4 CO2. Its pathway is porphyrin-containing compound metabolism; protoporphyrin-IX biosynthesis; coproporphyrinogen-III from 5-aminolevulinate: step 4/4. In terms of biological role, catalyzes the decarboxylation of four acetate groups of uroporphyrinogen-III to yield coproporphyrinogen-III. The sequence is that of Uroporphyrinogen decarboxylase from Staphylococcus epidermidis (strain ATCC 35984 / DSM 28319 / BCRC 17069 / CCUG 31568 / BM 3577 / RP62A).